The primary structure comprises 249 residues: Probable transcriptional regulatory protein Dtur_1615 (249 aa).

The protein belongs to the TACO1 family.

The protein localises to the cytoplasm. This is Probable transcriptional regulatory protein Dtur_1615 from Dictyoglomus turgidum (strain DSM 6724 / Z-1310).